Reading from the N-terminus, the 589-residue chain is Mediator of RNA polymerase II transcription subunit 26 (589 aa).

One can recognise a TFIIS N-terminal domain in the interval 10 to 87; the sequence is QMRDRLLQAI…RNWQKLIEPG (78 aa). 3 disordered regions span residues 83 to 233, 247 to 320, and 363 to 441; these read LIEP…TKLP, ARVD…DGPS, and LETK…PIPE. Over residues 190-213 the composition is skewed to basic and acidic residues; that stretch reads LLEKDDEVPSDRIRLEHLDNDRHN. Residues 259–268 are compositionally biased toward low complexity; sequence SPRYSSSPRS. Residues 276-297 are compositionally biased toward polar residues; sequence KRSTTYAPKGTLSSPSLNSAQV. Basic and acidic residues-rich tracts occupy residues 398 to 412 and 424 to 435; these read SEDRTKPRLKERRLT and TPKESHQEEECH.

Belongs to the Mediator complex subunit 26 family. In terms of assembly, component of the Mediator complex.

The protein resides in the nucleus. Its function is as follows. Component of the Mediator complex, a coactivator involved in the regulated transcription of nearly all RNA polymerase II-dependent genes. Mediator functions as a bridge to convey information from gene-specific regulatory proteins to the basal RNA polymerase II transcription machinery. Mediator is recruited to promoters by direct interactions with regulatory proteins and serves as a scaffold for the assembly of a functional preinitiation complex with RNA polymerase II and the general transcription factors. This Danio rerio (Zebrafish) protein is Mediator of RNA polymerase II transcription subunit 26 (med26).